We begin with the raw amino-acid sequence, 510 residues long: MTGEKIRSLHKDQKPSKDEDLLEPDEEATAGGTFTRTGKLKSSKMFSNHKVIRSPSNPALLQNHHHQQISPITPGESKSDVYFPVHECVLKGDIRRLSSLIRSHSIGQKDSHGNTPLHLAVMLGNKECAHLLLAHNAPVKVKNAQGWSPLAEAISYGDRQMITALLRKLKQQSRESVEEKRPRLLKALKELGDFYLELHWDFQSWVPLLSRILPSDACKIYKQGINIRLDTTLIDFTDMKCQRGDLSFIFNGDAAPSESFVVLDNEQKVYQRIHHEESEMETEEEVDILMSSDIYSATLSTKSITFTRAQTGWLFREDKTERVGNFLADFYLVNGLILESRKRREHLTEEDILRNKAIMESLSKGGNLMEQNFEPVRRQSLTPPPPNTITWEEYISAENGKAPHLGRELVCKENKKTFKATIAMSQDFPLGIESLLNVLEVIAPFKHFNKLREFVQMKLPPGFPVKLDIPVFPTITATVTFQEFRYGEFEDAIFTIPDDYKEDPSRFPDL.

The segment covering 1 to 19 has biased composition (basic and acidic residues); the sequence is MTGEKIRSLHKDQKPSKDE. Residues 1 to 35 form a disordered region; it reads MTGEKIRSLHKDQKPSKDEDLLEPDEEATAGGTFT. ANK repeat units follow at residues 80-111, 112-141, and 145-174; these read DVYF…QKDS, HGNT…PVKV, and QGWS…QQSR.

The protein localises to the endoplasmic reticulum membrane. Its function is as follows. Acts as a molecular chaperone for G protein-coupled receptors, regulating their biogenesis and exit from the ER. This is Ankyrin repeat domain-containing protein 13C-A (ankrd13c-a) from Xenopus laevis (African clawed frog).